A 210-amino-acid chain; its full sequence is LexA repressor (210 aa).

Residues 29-49 constitute a DNA-binding region (H-T-H motif); it reads VREIGEAVDLSSTSTVHGHIS. Active-site for autocatalytic cleavage activity residues include Ser130 and Lys168.

It belongs to the peptidase S24 family. As to quaternary structure, homodimer.

The catalysed reaction is Hydrolysis of Ala-|-Gly bond in repressor LexA.. Its function is as follows. Represses a number of genes involved in the response to DNA damage (SOS response), including recA and lexA. In the presence of single-stranded DNA, RecA interacts with LexA causing an autocatalytic cleavage which disrupts the DNA-binding part of LexA, leading to derepression of the SOS regulon and eventually DNA repair. The polypeptide is LexA repressor (Lactiplantibacillus plantarum (strain ATCC BAA-793 / NCIMB 8826 / WCFS1) (Lactobacillus plantarum)).